Here is a 404-residue protein sequence, read N- to C-terminus: Adenylosuccinate synthetase (404 aa).

GTP-binding positions include 12 to 18 and 40 to 42; these read GDEGKGK and GHT. Asp13 acts as the Proton acceptor in catalysis. Mg(2+) contacts are provided by Asp13 and Gly40. Residues 13–16, 38–41, Thr121, Arg135, Gln213, Thr228, and Arg296 each bind IMP; these read DEGK and NAGH. Residue His41 is the Proton donor of the active site. 292–298 contributes to the substrate binding site; sequence TTTGRAR. Residues Arg298, 324-326, and 389-391 contribute to the GTP site; these read KMD and SCG.

Belongs to the adenylosuccinate synthetase family. In terms of assembly, homodimer. It depends on Mg(2+) as a cofactor.

The protein localises to the cytoplasm. It catalyses the reaction IMP + L-aspartate + GTP = N(6)-(1,2-dicarboxyethyl)-AMP + GDP + phosphate + 2 H(+). The protein operates within purine metabolism; AMP biosynthesis via de novo pathway; AMP from IMP: step 1/2. Plays an important role in the de novo pathway of purine nucleotide biosynthesis. Catalyzes the first committed step in the biosynthesis of AMP from IMP. The sequence is that of Adenylosuccinate synthetase from Deinococcus geothermalis (strain DSM 11300 / CIP 105573 / AG-3a).